Consider the following 124-residue polypeptide: Holo-[acyl-carrier-protein] synthase (124 aa).

D8 and E56 together coordinate Mg(2+).

The protein belongs to the P-Pant transferase superfamily. AcpS family. Mg(2+) is required as a cofactor.

Its subcellular location is the cytoplasm. The catalysed reaction is apo-[ACP] + CoA = holo-[ACP] + adenosine 3',5'-bisphosphate + H(+). In terms of biological role, transfers the 4'-phosphopantetheine moiety from coenzyme A to a Ser of acyl-carrier-protein. In Nitratidesulfovibrio vulgaris (strain ATCC 29579 / DSM 644 / CCUG 34227 / NCIMB 8303 / VKM B-1760 / Hildenborough) (Desulfovibrio vulgaris), this protein is Holo-[acyl-carrier-protein] synthase.